The primary structure comprises 387 residues: ATP phosphoribosyltransferase regulatory subunit (387 aa).

The protein belongs to the class-II aminoacyl-tRNA synthetase family. HisZ subfamily. In terms of assembly, heteromultimer composed of HisG and HisZ subunits.

Its subcellular location is the cytoplasm. The protein operates within amino-acid biosynthesis; L-histidine biosynthesis; L-histidine from 5-phospho-alpha-D-ribose 1-diphosphate: step 1/9. Functionally, required for the first step of histidine biosynthesis. May allow the feedback regulation of ATP phosphoribosyltransferase activity by histidine. The protein is ATP phosphoribosyltransferase regulatory subunit of Methylobacillus flagellatus (strain ATCC 51484 / DSM 6875 / VKM B-1610 / KT).